Here is a 423-residue protein sequence, read N- to C-terminus: Tyrosine--tRNA ligase (423 aa).

Residue Y35 coordinates L-tyrosine. Positions 40 to 49 (PTAASLHVGH) match the 'HIGH' region motif. Positions 170 and 174 each coordinate L-tyrosine. Positions 231 to 235 (KFGKS) match the 'KMSKS' region motif. K234 contacts ATP. Residues 353–419 (GPLVDLLVEV…GKKNLAAVEV (67 aa)) form the S4 RNA-binding domain.

Belongs to the class-I aminoacyl-tRNA synthetase family. TyrS type 1 subfamily. As to quaternary structure, homodimer.

It is found in the cytoplasm. The catalysed reaction is tRNA(Tyr) + L-tyrosine + ATP = L-tyrosyl-tRNA(Tyr) + AMP + diphosphate + H(+). Its function is as follows. Catalyzes the attachment of tyrosine to tRNA(Tyr) in a two-step reaction: tyrosine is first activated by ATP to form Tyr-AMP and then transferred to the acceptor end of tRNA(Tyr). The protein is Tyrosine--tRNA ligase of Streptomyces griseus subsp. griseus (strain JCM 4626 / CBS 651.72 / NBRC 13350 / KCC S-0626 / ISP 5235).